A 309-amino-acid polypeptide reads, in one-letter code: Taste receptor type 2 member 46 (309 aa).

Residue Met-1 is a topological domain, extracellular. Residues 2–22 form a helical membrane-spanning segment; it reads ITFLPITFSILIVVIFFIGNF. The Cytoplasmic segment spans residues 23–46; it reads ANGFIALINSIEWVKRQKISFAGQ. The chain crosses the membrane as a helical span at residues 47-67; the sequence is ILTALAVSRVGLLWVLSLHWY. Over 68-86 the chain is Extracellular; it reads ATEFNLAFHSVEVRSTAYN. Residues 87–107 form a helical membrane-spanning segment; that stretch reads VWVVTNHFSNWLSTSLSMFYL. At 108-126 the chain is on the cytoplasmic side; sequence LRIATFSNLIFLHLNRRVK. Residues 127-147 traverse the membrane as a helical segment; it reads SVILVTLLGPLLFLVCQLFVM. At 148-178 the chain is on the extracellular side; sequence NMNQIVRTKEYEGNMTWKIKLKSAMYLSNTT. N-linked (GlcNAc...) asparagine glycans are attached at residues Asn-161 and Asn-176. The chain crosses the membrane as a helical span at residues 179 to 199; the sequence is VAMLANFVPLTLTLISFLLLI. Residues 200-229 lie on the Cytoplasmic side of the membrane; the sequence is CSLCKHLKKMRVHGKGSQDPSTKVHTKALQ. The helical transmembrane segment at 230–250 threads the bilayer; that stretch reads IVTSFLLVCAIYFLSIILSVW. The Extracellular segment spans residues 251 to 259; it reads NSGGLENKP. A helical transmembrane segment spans residues 260 to 280; it reads FFMFCQAIKFSYPSTHPFILI. Over 281–309 the chain is Cytoplasmic; that stretch reads WGNKTLKQTFLSVLRNVRYWVKGQKPSSP.

This sequence belongs to the G-protein coupled receptor T2R family.

The protein localises to the membrane. It localises to the cell projection. The protein resides in the cilium membrane. Receptor that may play a role in the perception of bitterness and is gustducin-linked. May play a role in sensing the chemical composition of the gastrointestinal content. The activity of this receptor may stimulate alpha gustducin, mediate PLC-beta-2 activation and lead to the gating of TRPM5. In airway epithelial cells, binding of bitter compounds increases the intracellular calcium ion concentration and stimulates ciliary beat frequency. In Papio hamadryas (Hamadryas baboon), this protein is Taste receptor type 2 member 46 (TAS2R46).